The following is a 130-amino-acid chain: MTQEFNYGTGRRKTATARTRLYSGTGKIVVNGRPYDEYFPRKSLQMIIRQPLALTKNVESFDIHVNVQGGGVRGQAEAVRHGISRALLEVDVEMRSSLKRAGFLTRDARKKERKKYGQRAARARFQYSKR.

Residues 109–130 are disordered; it reads RKKERKKYGQRAARARFQYSKR.

It belongs to the universal ribosomal protein uS9 family.

This chain is Small ribosomal subunit protein uS9, found in Oleidesulfovibrio alaskensis (strain ATCC BAA-1058 / DSM 17464 / G20) (Desulfovibrio alaskensis).